A 247-amino-acid polypeptide reads, in one-letter code: Cationic trypsin-3 (247 aa).

The first 15 residues, 1 to 15, serve as a signal peptide directing secretion; it reads MKALIFLAFLGAAVA. The propeptide at 16–24 is activation peptide; the sequence is LPLDDDDDK. The Peptidase S1 domain occupies 25–245; the sequence is IVGGYTCQKN…YVNWIQQTVA (221 aa). Disulfide bonds link C31/C161, C49/C65, C133/C234, C140/C207, C172/C186, and C197/C221. H64 (charge relay system) is an active-site residue. E76, N78, V81, and E86 together coordinate Ca(2+). D108 functions as the Charge relay system in the catalytic mechanism. S201 (charge relay system) is an active-site residue.

Belongs to the peptidase S1 family. Ca(2+) serves as cofactor.

The protein resides in the secreted. It localises to the extracellular space. It carries out the reaction Preferential cleavage: Arg-|-Xaa, Lys-|-Xaa.. This is Cationic trypsin-3 (Try3) from Rattus norvegicus (Rat).